The primary structure comprises 635 residues: Threonine--tRNA ligase (635 aa).

In terms of domain architecture, TGS spans 1–58 (MIRVICNNETVELPKGATAADFASKIKNSHYFAGVVINDQIKDLSTTLNEGDTLRFVT). Residues 237 to 528 (DHRVLGAKLD…LIEHFKGKFP (292 aa)) are catalytic. Zn(2+) contacts are provided by cysteine 328, histidine 379, and histidine 505.

Belongs to the class-II aminoacyl-tRNA synthetase family. As to quaternary structure, homodimer. It depends on Zn(2+) as a cofactor.

Its subcellular location is the cytoplasm. It catalyses the reaction tRNA(Thr) + L-threonine + ATP = L-threonyl-tRNA(Thr) + AMP + diphosphate + H(+). Functionally, catalyzes the attachment of threonine to tRNA(Thr) in a two-step reaction: L-threonine is first activated by ATP to form Thr-AMP and then transferred to the acceptor end of tRNA(Thr). Also edits incorrectly charged L-seryl-tRNA(Thr). The polypeptide is Threonine--tRNA ligase (Chlamydia caviae (strain ATCC VR-813 / DSM 19441 / 03DC25 / GPIC) (Chlamydophila caviae)).